A 307-amino-acid polypeptide reads, in one-letter code: Phosphate import ATP-binding protein PstB (307 aa).

Positions 1–30 (MSETTYTTTEDTDDTNSTDSMVGTTTGETD) are disordered. Residues 48-302 (LGVDDLDVYY…PQSERVEDYI (255 aa)) form the ABC transporter domain. An ATP-binding site is contributed by 80–87 (GPSGCGKS).

Belongs to the ABC transporter superfamily. Phosphate importer (TC 3.A.1.7) family. In terms of assembly, the complex is composed of two ATP-binding proteins (PstB), two transmembrane proteins (PstC and PstA) and a solute-binding protein (PstS).

The protein resides in the cell membrane. It catalyses the reaction phosphate(out) + ATP + H2O = ADP + 2 phosphate(in) + H(+). In terms of biological role, part of the ABC transporter complex PstSACB involved in phosphate import. Responsible for energy coupling to the transport system. The polypeptide is Phosphate import ATP-binding protein PstB (Haloquadratum walsbyi (strain DSM 16790 / HBSQ001)).